Reading from the N-terminus, the 799-residue chain is Protein-lysine N-methyltransferase SMYD4 (799 aa).

Residue 112-114 coordinates S-adenosyl-L-methionine; the sequence is RSA. In terms of domain architecture, SET spans 233-570; the sequence is LSVSLCTHPL…KGQEILHCYG (338 aa). Residues Cys296, Cys299, Cys309, Cys312, Cys318, Cys322, His331, and Cys335 each coordinate Zn(2+). The MYND-type zinc-finger motif lies at 296–335; sequence CHRCLKHTLATVPCGSCSYAKYCSQECMQQAWDLYHSTEC. S-adenosyl-L-methionine-binding positions include 535–536, Tyr569, and Phe591; that span reads NH.

Belongs to the class V-like SAM-binding methyltransferase superfamily. As to quaternary structure, interacts (via MYND-type zinc finger) with HDAC1.

It is found in the nucleus. Its subcellular location is the cytoplasm. It carries out the reaction L-lysyl-[protein] + S-adenosyl-L-methionine = N(6)-methyl-L-lysyl-[protein] + S-adenosyl-L-homocysteine + H(+). In terms of biological role, protein-lysine N-methyltransferase. Monomethylates PRMT5, modulating its transcriptional activity. May also act as a histone methyltransferase. Plays a critical role in cardiac development. Acts as a key epigenetic regulator of gene expression during cardiac development via its dual activities as a methyltransferase and negative regulator of HDAC1. The chain is Protein-lysine N-methyltransferase SMYD4 (Smyd4) from Mus musculus (Mouse).